The following is a 250-amino-acid chain: Leucyl/phenylalanyl-tRNA--protein transferase (250 aa).

The tract at residues 1 to 21 (MTPFRRPTVLGTSASAPFPPA) is disordered.

It belongs to the L/F-transferase family.

The protein localises to the cytoplasm. It catalyses the reaction N-terminal L-lysyl-[protein] + L-leucyl-tRNA(Leu) = N-terminal L-leucyl-L-lysyl-[protein] + tRNA(Leu) + H(+). The catalysed reaction is N-terminal L-arginyl-[protein] + L-leucyl-tRNA(Leu) = N-terminal L-leucyl-L-arginyl-[protein] + tRNA(Leu) + H(+). It carries out the reaction L-phenylalanyl-tRNA(Phe) + an N-terminal L-alpha-aminoacyl-[protein] = an N-terminal L-phenylalanyl-L-alpha-aminoacyl-[protein] + tRNA(Phe). In terms of biological role, functions in the N-end rule pathway of protein degradation where it conjugates Leu, Phe and, less efficiently, Met from aminoacyl-tRNAs to the N-termini of proteins containing an N-terminal arginine or lysine. This Xanthomonas euvesicatoria pv. vesicatoria (strain 85-10) (Xanthomonas campestris pv. vesicatoria) protein is Leucyl/phenylalanyl-tRNA--protein transferase.